The following is a 413-amino-acid chain: Glutamyl-tRNA reductase (413 aa).

Substrate contacts are provided by residues 57-60 (TCNR), Ser-113, 118-120 (DFE), and Gln-124. Cys-58 (nucleophile) is an active-site residue. 193 to 198 (GTGKIG) is a binding site for NADP(+).

This sequence belongs to the glutamyl-tRNA reductase family. Homodimer.

The catalysed reaction is (S)-4-amino-5-oxopentanoate + tRNA(Glu) + NADP(+) = L-glutamyl-tRNA(Glu) + NADPH + H(+). The protein operates within porphyrin-containing compound metabolism; protoporphyrin-IX biosynthesis; 5-aminolevulinate from L-glutamyl-tRNA(Glu): step 1/2. Its function is as follows. Catalyzes the NADPH-dependent reduction of glutamyl-tRNA(Glu) to glutamate 1-semialdehyde (GSA). This Flavobacterium psychrophilum (strain ATCC 49511 / DSM 21280 / CIP 103535 / JIP02/86) protein is Glutamyl-tRNA reductase.